Reading from the N-terminus, the 344-residue chain is Microcin C7 self-immunity protein MccF (344 aa).

The protein belongs to the peptidase S66 family.

In terms of biological role, involved in specific self-immunity to microcin C7. The polypeptide is Microcin C7 self-immunity protein MccF (mccF) (Escherichia coli).